The following is a 234-amino-acid chain: Probable transcriptional regulatory protein Psyr_3028 (234 aa).

Belongs to the TACO1 family.

The protein localises to the cytoplasm. The chain is Probable transcriptional regulatory protein Psyr_3028 from Pseudomonas syringae pv. syringae (strain B728a).